An 856-amino-acid polypeptide reads, in one-letter code: MSLSEEQVQHFLDQNPDFTDQYFGKTLSPEHVAGACGDGQPTDCASFRELCQVEESAALFELVQDMQESVNMERVVFKILRRLCTILRADRCSLFMYRQRNGVAELATRLFSVQPGSALEDCLVPPDSEIVFPLDIGVVGHVAQTKKMVNVQDVTECPHFSPFADELTGYETRNILATPIMNGKDVVAVIMALNKLDGPCFTSEDEDVFLKYLNFGTLNLKIYHLSYLHNCETRRGQVLLWSANKVFEELTDIERQFHKAFYTVRAYLNCDRYSVGLLDMTKEKEFFDVWPVLMGEAQPYSGPRTPDGREIVFYKVIDYILHGKEDIKVIPSPPADHWALASGLPTYVAESGFICNIMNTAADEMFTFQEGPLDDSGWVIKNVLSMPIVNKKEEIVGVATFYNRKDGKPFDEQDEVLMESLTQFLGWSVLNTDTYDKMNKLENRKDIAQDMVLYHVRCDKDEIQLILPTRERLGKEPADCEEDELGILLKEVLPGPSKFDIYEFHFSDLECTELELVKCGIQMYYELGVVRKFQIPQEVLVRFLFSVSKGYRRITYHNWRHGFNVAQTMFTLLTTGKLKSYYTDLEAFAMVTAGLCHDIDHRGTNNLYQMKSQNPLAKLHGSSILERHHLEFGKFLLSEETLNIYQNLNRRQHEHVIHLMDIAIIATDLALYFKKRTMFQKIVDESKNYEDRKSWVEYLSLETTRKEIVMAMMMTACDLSAITKPWEVQSKVALLVAAEFWEQGDLERTVLDQQPIPMMDRNKAAELPKLQVGFIDFVCTFVYKEFSRFHEEILPMFDRLQNNRKEWKALADEYEAKLKALEEEKQQQEDRTTAKKAGTEICNGGPAPKSSTCCIL.

Residue Ser-2 is modified to N-acetylserine. GAF domains follow at residues 71-220 (NMER…TLNL) and 252-429 (DIER…GWSV). The region spanning 481 to 814 (EEDELGILLK…KEWKALADEY (334 aa)) is the PDEase domain. Catalysis depends on His-557, which acts as the Proton donor. The a divalent metal cation site is built by His-561, His-597, Asp-598, and Asp-718. A compositionally biased stretch (basic and acidic residues) spans 823 to 833 (EEKQQQEDRTT). The disordered stretch occupies residues 823–842 (EEKQQQEDRTTAKKAGTEIC). The S-geranylgeranyl cysteine moiety is linked to residue Cys-853. The propeptide at 854-856 (CIL) is removed in mature form.

The protein belongs to the cyclic nucleotide phosphodiesterase family. As to quaternary structure, oligomer composed of two catalytic chains (alpha and beta), an inhibitory chain (gamma) and the delta chain. A divalent metal cation is required as a cofactor.

The protein localises to the membrane. It localises to the cell projection. It is found in the cilium. The protein resides in the photoreceptor outer segment. The catalysed reaction is 3',5'-cyclic GMP + H2O = GMP + H(+). Functionally, rod-specific cGMP phosphodiesterase that catalyzes the hydrolysis of 3',5'-cyclic GMP. Necessary for the formation of a functional phosphodiesterase holoenzyme. Involved in retinal circadian rhythm photoentrainment via modulation of UVA and orange light-induced phase-shift of the retina clock. May participate in processes of transmission and amplification of the visual signal. In Canis lupus familiaris (Dog), this protein is Rod cGMP-specific 3',5'-cyclic phosphodiesterase subunit beta.